Here is a 224-residue protein sequence, read N- to C-terminus: Uracil-DNA glycosylase (224 aa).

Aspartate 64 functions as the Proton acceptor in the catalytic mechanism.

This sequence belongs to the uracil-DNA glycosylase (UDG) superfamily. UNG family.

The protein resides in the cytoplasm. The catalysed reaction is Hydrolyzes single-stranded DNA or mismatched double-stranded DNA and polynucleotides, releasing free uracil.. Its function is as follows. Excises uracil residues from the DNA which can arise as a result of misincorporation of dUMP residues by DNA polymerase or due to deamination of cytosine. This is Uracil-DNA glycosylase from Clostridioides difficile (strain 630) (Peptoclostridium difficile).